Here is a 122-residue protein sequence, read N- to C-terminus: UPF0102 protein ECH_0093 (122 aa).

It belongs to the UPF0102 family.

This Ehrlichia chaffeensis (strain ATCC CRL-10679 / Arkansas) protein is UPF0102 protein ECH_0093.